Reading from the N-terminus, the 167-residue chain is Phosphopantetheine adenylyltransferase (167 aa).

Position 9 (serine 9) interacts with substrate. Residues 9–10 and histidine 17 each bind ATP; that span reads SF. The substrate site is built by lysine 41, leucine 73, and lysine 87. Residues 88–90, glutamate 98, and 123–129 contribute to the ATP site; these read GLR and YSYLSSS.

The protein belongs to the bacterial CoaD family. In terms of assembly, homohexamer. Requires Mg(2+) as cofactor.

It localises to the cytoplasm. It catalyses the reaction (R)-4'-phosphopantetheine + ATP + H(+) = 3'-dephospho-CoA + diphosphate. Its pathway is cofactor biosynthesis; coenzyme A biosynthesis; CoA from (R)-pantothenate: step 4/5. In terms of biological role, reversibly transfers an adenylyl group from ATP to 4'-phosphopantetheine, yielding dephospho-CoA (dPCoA) and pyrophosphate. The chain is Phosphopantetheine adenylyltransferase from Caldicellulosiruptor bescii (strain ATCC BAA-1888 / DSM 6725 / KCTC 15123 / Z-1320) (Anaerocellum thermophilum).